A 198-amino-acid polypeptide reads, in one-letter code: Peroxiredoxin-2 (198 aa).

Residue Ala2 is modified to N-acetylalanine. The 159-residue stretch at 6–164 folds into the Thioredoxin domain; it reads AHIGKPAPDF…ALRLVQAFQY (159 aa). The Cysteine sulfenic acid (-SOH) intermediate role is filled by Cys51. A Phosphoserine modification is found at Ser112. At Thr182 the chain carries Phosphothreonine. Lys196 is modified (N6-acetyllysine).

It belongs to the peroxiredoxin family. AhpC/Prx1 subfamily. As to quaternary structure, homodimer; disulfide-linked, upon oxidation. 5 homodimers assemble to form a ring-like decamer. Interacts with TIPIN. The enzyme can be inactivated by further oxidation of the cysteine sulfenic acid (C(P)-SOH) to sulphinic acid (C(P)-SO2H) instead of its condensation to a disulfide bond. It can be reactivated by forming a transient disulfide bond with sulfiredoxin SRXN1, which reduces the cysteine sulfinic acid in an ATP- and Mg-dependent manner. Post-translationally, acetylation increases resistance to transition to high molecular-mass complexes. Deacetylated by HDAC6 which decreases reducing activity.

It is found in the cytoplasm. It carries out the reaction a hydroperoxide + [thioredoxin]-dithiol = an alcohol + [thioredoxin]-disulfide + H2O. Functionally, thiol-specific peroxidase that catalyzes the reduction of hydrogen peroxide and organic hydroperoxides to water and alcohols, respectively. Plays a role in cell protection against oxidative stress by detoxifying peroxides and as sensor of hydrogen peroxide-mediated signaling events. Might participate in the signaling cascades of growth factors and tumor necrosis factor-alpha by regulating the intracellular concentrations of H(2)O(2). The protein is Peroxiredoxin-2 (Prdx2) of Rattus norvegicus (Rat).